Reading from the N-terminus, the 147-residue chain is UPF0306 protein YhbP (147 aa).

This sequence belongs to the UPF0306 family.

In Escherichia coli O1:K1 / APEC, this protein is UPF0306 protein YhbP.